Reading from the N-terminus, the 349-residue chain is Phospho-N-acetylmuramoyl-pentapeptide-transferase (349 aa).

Helical transmembrane passes span L13 to V33, G69 to G89, F91 to D111, F129 to S149, L165 to I185, L197 to L217, V228 to F248, L252 to M272, I278 to L298, and I327 to L347.

The protein belongs to the glycosyltransferase 4 family. MraY subfamily. Mg(2+) serves as cofactor.

The protein localises to the cell inner membrane. The enzyme catalyses UDP-N-acetyl-alpha-D-muramoyl-L-alanyl-gamma-D-glutamyl-meso-2,6-diaminopimeloyl-D-alanyl-D-alanine + di-trans,octa-cis-undecaprenyl phosphate = di-trans,octa-cis-undecaprenyl diphospho-N-acetyl-alpha-D-muramoyl-L-alanyl-D-glutamyl-meso-2,6-diaminopimeloyl-D-alanyl-D-alanine + UMP. The protein operates within cell wall biogenesis; peptidoglycan biosynthesis. Functionally, catalyzes the initial step of the lipid cycle reactions in the biosynthesis of the cell wall peptidoglycan: transfers peptidoglycan precursor phospho-MurNAc-pentapeptide from UDP-MurNAc-pentapeptide onto the lipid carrier undecaprenyl phosphate, yielding undecaprenyl-pyrophosphoryl-MurNAc-pentapeptide, known as lipid I. In Chlamydia pneumoniae (Chlamydophila pneumoniae), this protein is Phospho-N-acetylmuramoyl-pentapeptide-transferase.